Consider the following 327-residue polypeptide: ATPase GET3 (327 aa).

Lys-27 to Thr-34 contributes to the ATP binding site. Asp-56 is a catalytic residue. Glu-231 and Asn-258 together coordinate ATP. Zn(2+) contacts are provided by Cys-269 and Cys-272.

The protein belongs to the arsA ATPase family. Homodimer. Component of the Golgi to ER traffic (GET) complex, which is composed of GET1, GET2 and GET3. Within the complex, GET1 and GET2 form a heterotetramer which is stabilized by phosphatidylinositol binding and which binds to the GET3 homodimer. Interacts with the chloride channel protein GEF1.

It is found in the cytoplasm. The protein localises to the endoplasmic reticulum. The protein resides in the golgi apparatus. Functionally, ATPase required for the post-translational delivery of tail-anchored (TA) proteins to the endoplasmic reticulum. Recognizes and selectively binds the transmembrane domain of TA proteins in the cytosol. This complex then targets to the endoplasmic reticulum by membrane-bound receptors GET1 and GET2, where the tail-anchored protein is released for insertion. This process is regulated by ATP binding and hydrolysis. ATP binding drives the homodimer towards the closed dimer state, facilitating recognition of newly synthesized TA membrane proteins. ATP hydrolysis is required for insertion. Subsequently, the homodimer reverts towards the open dimer state, lowering its affinity for the GET1-GET2 receptor, and returning it to the cytosol to initiate a new round of targeting. Cooperates with the HDEL receptor ERD2 to mediate the ATP-dependent retrieval of resident ER proteins that contain a C-terminal H-D-E-L retention signal from the Golgi to the ER. Involved in low-level resistance to the oxyanions arsenite and arsenate, and in heat tolerance. This chain is ATPase GET3, found in Yarrowia lipolytica (strain CLIB 122 / E 150) (Yeast).